A 260-amino-acid polypeptide reads, in one-letter code: MVLIRVLANLLLLQLSYAQESSELVIGGDECDINEHPFLVALHTARSKRFHCAGTLLNKEWVLTAARCDRKNIRIKFGVHNKNVQNEDEEMRVPKEKHFCVSSKTYTRWDKDIMLIRLKRPVNDGTHIAPLSLPSNPPSVGSVCRIMGWGSITTTKVTYPDVPHCANIKLFDYSVCRDAYKGLPEKSRTLCAGILEGGIDSCKVDNGGPLICNGQFQGIGSWEGHPCAQPLKPALYTNVFEYTDWIEGIIARNTTVTCPP.

An N-terminal signal peptide occupies residues 1-18 (MVLIRVLANLLLLQLSYA). Residues 19–24 (QESSEL) constitute a propeptide that is removed on maturation. In terms of domain architecture, Peptidase S1 spans 25–251 (VIGGDECDIN…YTDWIEGIIA (227 aa)). Cystine bridges form between cysteine 31–cysteine 165, cysteine 52–cysteine 68, cysteine 100–cysteine 258, cysteine 144–cysteine 212, cysteine 176–cysteine 191, and cysteine 202–cysteine 227. N-linked (GlcNAc...) asparagine glycosylation occurs at asparagine 253.

Belongs to the peptidase S1 family. Snake venom subfamily. As to expression, expressed by the venom gland.

The protein localises to the secreted. Functionally, snake venom serine protease homolog that may act in the hemostasis system of the prey. This chain is Snake venom serine protease homolog 1, found in Bitis gabonica (Gaboon adder).